The sequence spans 166 residues: Small ribosomal subunit protein uS5 (166 aa).

An S5 DRBM domain is found at 11-74; sequence LEDRVVAINR…DAARKNLIEV (64 aa).

It belongs to the universal ribosomal protein uS5 family. Part of the 30S ribosomal subunit. Contacts proteins S4 and S8.

Functionally, with S4 and S12 plays an important role in translational accuracy. In terms of biological role, located at the back of the 30S subunit body where it stabilizes the conformation of the head with respect to the body. In Ligilactobacillus salivarius (strain UCC118) (Lactobacillus salivarius), this protein is Small ribosomal subunit protein uS5.